The following is a 148-amino-acid chain: SsrA-binding protein (148 aa).

A compositionally biased stretch (basic and acidic residues) spans 129-142 (ETEKKRDWEREKAR). The interval 129-148 (ETEKKRDWEREKARIMRAGT) is disordered.

The protein belongs to the SmpB family.

The protein localises to the cytoplasm. Functionally, required for rescue of stalled ribosomes mediated by trans-translation. Binds to transfer-messenger RNA (tmRNA), required for stable association of tmRNA with ribosomes. tmRNA and SmpB together mimic tRNA shape, replacing the anticodon stem-loop with SmpB. tmRNA is encoded by the ssrA gene; the 2 termini fold to resemble tRNA(Ala) and it encodes a 'tag peptide', a short internal open reading frame. During trans-translation Ala-aminoacylated tmRNA acts like a tRNA, entering the A-site of stalled ribosomes, displacing the stalled mRNA. The ribosome then switches to translate the ORF on the tmRNA; the nascent peptide is terminated with the 'tag peptide' encoded by the tmRNA and targeted for degradation. The ribosome is freed to recommence translation, which seems to be the essential function of trans-translation. This chain is SsrA-binding protein, found in Burkholderia orbicola (strain AU 1054).